The chain runs to 229 residues: uncharacterized protein (229 aa).

The ABC transporter domain occupies Leu-2–Ala-229. Residue Gly-38–Ser-45 participates in ATP binding.

It belongs to the ABC transporter superfamily.

This is an uncharacterized protein from Bacillus subtilis (strain 168).